A 29-amino-acid polypeptide reads, in one-letter code: Cliotide T18 (29 aa).

A cross-link (cyclopeptide (Gly-Asn)) is located at residues 1 to 29 (GLPICGETCFTGTCYTPGCTCSYPVCKKN). Disulfide bonds link Cys5/Cys19, Cys9/Cys21, and Cys14/Cys26.

Contains 3 disulfide bonds. In terms of processing, this is a cyclic peptide. In terms of tissue distribution, expressed in root nodules but not in seed.

Its function is as follows. Probably participates in a plant defense mechanism. This chain is Cliotide T18, found in Clitoria ternatea (Butterfly pea).